A 307-amino-acid polypeptide reads, in one-letter code: 4-hydroxythreonine-4-phosphate dehydrogenase (307 aa).

Positions 126 and 127 each coordinate substrate. A divalent metal cation contacts are provided by histidine 156, histidine 195, and histidine 251. Substrate-binding residues include lysine 259, asparagine 268, and arginine 277.

It belongs to the PdxA family. As to quaternary structure, homodimer. Requires Zn(2+) as cofactor. Mg(2+) is required as a cofactor. It depends on Co(2+) as a cofactor.

Its subcellular location is the cytoplasm. It carries out the reaction 4-(phosphooxy)-L-threonine + NAD(+) = 3-amino-2-oxopropyl phosphate + CO2 + NADH. It functions in the pathway cofactor biosynthesis; pyridoxine 5'-phosphate biosynthesis; pyridoxine 5'-phosphate from D-erythrose 4-phosphate: step 4/5. Its function is as follows. Catalyzes the NAD(P)-dependent oxidation of 4-(phosphooxy)-L-threonine (HTP) into 2-amino-3-oxo-4-(phosphooxy)butyric acid which spontaneously decarboxylates to form 3-amino-2-oxopropyl phosphate (AHAP). This is 4-hydroxythreonine-4-phosphate dehydrogenase from Helicobacter pylori (strain Shi470).